The following is a 403-amino-acid chain: Multifunctional CCA protein (403 aa).

ATP-binding residues include G8 and R11. CTP contacts are provided by G8 and R11. Residues D21 and D23 each coordinate Mg(2+). R91, R137, and R140 together coordinate ATP. CTP is bound by residues R91, R137, and R140. An HD domain is found at T228–W329.

It belongs to the tRNA nucleotidyltransferase/poly(A) polymerase family. Bacterial CCA-adding enzyme type 1 subfamily. Monomer. Can also form homodimers and oligomers. Requires Mg(2+) as cofactor. It depends on Ni(2+) as a cofactor.

The enzyme catalyses a tRNA precursor + 2 CTP + ATP = a tRNA with a 3' CCA end + 3 diphosphate. The catalysed reaction is a tRNA with a 3' CCA end + 2 CTP + ATP = a tRNA with a 3' CCACCA end + 3 diphosphate. In terms of biological role, catalyzes the addition and repair of the essential 3'-terminal CCA sequence in tRNAs without using a nucleic acid template. Adds these three nucleotides in the order of C, C, and A to the tRNA nucleotide-73, using CTP and ATP as substrates and producing inorganic pyrophosphate. tRNA 3'-terminal CCA addition is required both for tRNA processing and repair. Also involved in tRNA surveillance by mediating tandem CCA addition to generate a CCACCA at the 3' terminus of unstable tRNAs. While stable tRNAs receive only 3'-terminal CCA, unstable tRNAs are marked with CCACCA and rapidly degraded. This chain is Multifunctional CCA protein, found in Vibrio cholerae serotype O1 (strain ATCC 39315 / El Tor Inaba N16961).